Consider the following 295-residue polypeptide: Acetylglutamate kinase (295 aa).

Substrate-binding positions include 64–65, Arg86, and Asn190; that span reads GG.

It belongs to the acetylglutamate kinase family. ArgB subfamily.

Its subcellular location is the cytoplasm. The enzyme catalyses N-acetyl-L-glutamate + ATP = N-acetyl-L-glutamyl 5-phosphate + ADP. It functions in the pathway amino-acid biosynthesis; L-arginine biosynthesis; N(2)-acetyl-L-ornithine from L-glutamate: step 2/4. Its function is as follows. Catalyzes the ATP-dependent phosphorylation of N-acetyl-L-glutamate. This is Acetylglutamate kinase from Pelotomaculum thermopropionicum (strain DSM 13744 / JCM 10971 / SI).